The chain runs to 116 residues: Ribonuclease P protein component (116 aa).

It belongs to the RnpA family. As to quaternary structure, consists of a catalytic RNA component (M1 or rnpB) and a protein subunit.

It catalyses the reaction Endonucleolytic cleavage of RNA, removing 5'-extranucleotides from tRNA precursor.. Functionally, RNaseP catalyzes the removal of the 5'-leader sequence from pre-tRNA to produce the mature 5'-terminus. It can also cleave other RNA substrates such as 4.5S RNA. The protein component plays an auxiliary but essential role in vivo by binding to the 5'-leader sequence and broadening the substrate specificity of the ribozyme. The sequence is that of Ribonuclease P protein component from Leuconostoc citreum (strain KM20).